We begin with the raw amino-acid sequence, 178 residues long: MSGGKYVDSEGHLYTVPIREQGNIYKPNNKAMAEELSEKQVYDAHTKEIDLVNRDPKHLNDDVVKIDFEDVIAEPEGTHSFDGIWKASFTTFTVTKYWFYRLLSALFGIPMALIWGIYFAILSFLHIWAVVPCIKSFLIEIQCISRVYSIYVHTVCDPLFEAVGKIFSNVRINLQKEI.

The residue at position 2 (S2) is an N-acetylserine. At S2 the chain carries Phosphoserine. Residues 2-94 (SGGKYVDSEG…WKASFTTFTV (93 aa)) are required for homooligomerization. Residues 2-104 (SGGKYVDSEG…TKYWFYRLLS (103 aa)) are Cytoplasmic-facing. K5 carries the post-translational modification N6-acetyllysine; alternate. K5 is covalently cross-linked (Glycyl lysine isopeptide (Lys-Gly) (interchain with G-Cter in ubiquitin); alternate). Y6 carries the post-translational modification Phosphotyrosine. S9 bears the Phosphoserine mark. Phosphotyrosine; by ABL1 is present on Y14. A Phosphotyrosine modification is found at Y25. Residues K26 and K30 each participate in a glycyl lysine isopeptide (Lys-Gly) (interchain with G-Cter in ubiquitin) cross-link. S37 bears the Phosphoserine mark. Residues K39, K47, and K57 each participate in a glycyl lysine isopeptide (Lys-Gly) (interchain with G-Cter in ubiquitin) cross-link. The tract at residues 82 to 94 (DGIWKASFTTFTV) is interaction with CAVIN3. Positions 105 to 125 (ALFGIPMALIWGIYFAILSFL) form an intramembrane region, helical. The Cytoplasmic portion of the chain corresponds to 126-178 (HIWAVVPCIKSFLIEIQCISRVYSIYVHTVCDPLFEAVGKIFSNVRINLQKEI). Positions 131-142 (VPCIKSFLIEIQ) are interacts with SPRY1, SPRY2, SPRY3 and SPRY4. S-palmitoyl cysteine attachment occurs at residues C133, C143, and C156. Residues 149 to 160 (SIYVHTVCDPLF) form an interacts with SPRY1, SPRY2, and SPRY4 region. The interacts with SPRY1, SPRY2, SPRY3 and SPRY4 stretch occupies residues 167 to 178 (FSNVRINLQKEI).

The protein belongs to the caveolin family. In terms of assembly, homooligomer. Interacts with GLIPR2. Interacts with NOSTRIN. Interacts with SNAP25 and STX1A. Interacts (via the N-terminus) with DPP4; the interaction is direct. Interacts with CTNNB1, CDH1 and JUP. Interacts with PACSIN2; this interaction induces membrane tubulation. Interacts with SLC7A9. Interacts with BMX and BTK. Interacts with TGFBR1. Interacts with CAVIN3 (via leucine-zipper domain) in a cholesterol-sensitive manner. Interacts with CAVIN1. Interacts with EHD2 in a cholesterol-dependent manner. Forms a ternary complex with UBXN6 and VCP; mediates CAV1 targeting to lysosomes for degradation. Interacts with ABCG1; this interaction regulates ABCG1-mediated cholesterol efflux. Interacts with NEU3; this interaction enhances NEU3 sialidase activity within caveola. Interacts (via C-terminus) with SPRY1, SPRY2 (via C-terminus), SPRY3, and SPRY4. Interacts with IGFBP5; this interaction allows trafficking of IGFBP5 from the plasma membrane to the nucleus. Post-translationally, phosphorylated at Tyr-14 by ABL1 in response to oxidative stress. Ubiquitinated. Undergo monoubiquitination and multi- and/or polyubiquitination. Monoubiquitination of N-terminal lysines promotes integration in a ternary complex with UBXN6 and VCP which promotes oligomeric CAV1 targeting to lysosomes for degradation. Ubiquitinated by ZNRF1; leading to degradation and modulation of the TLR4-mediated immune response.

It localises to the golgi apparatus membrane. Its subcellular location is the cell membrane. The protein localises to the membrane. The protein resides in the caveola. It is found in the membrane raft. In terms of biological role, may act as a scaffolding protein within caveolar membranes. Forms a stable heterooligomeric complex with CAV2 that targets to lipid rafts and drives caveolae formation. Mediates the recruitment of CAVIN proteins (CAVIN1/2/3/4) to the caveolae. Interacts directly with G-protein alpha subunits and can functionally regulate their activity. Involved in the costimulatory signal essential for T-cell receptor (TCR)-mediated T-cell activation. Its binding to DPP4 induces T-cell proliferation and NF-kappa-B activation in a T-cell receptor/CD3-dependent manner. Recruits CTNNB1 to caveolar membranes and may regulate CTNNB1-mediated signaling through the Wnt pathway. Negatively regulates TGFB1-mediated activation of SMAD2/3 by mediating the internalization of TGFBR1 from membrane rafts leading to its subsequent degradation. Binds 20(S)-hydroxycholesterol (20(S)-OHC). This chain is Caveolin-1 (CAV1), found in Pongo abelii (Sumatran orangutan).